A 470-amino-acid chain; its full sequence is GDP-Man:Man(3)GlcNAc(2)-PP-Dol alpha-1,2-mannosyltransferase (470 aa).

Residues 1-15 (MSDTVISLISHSITT) lie on the Lumenal side of the membrane. A helical transmembrane segment spans residues 16–36 (VFYLVPLIIALIIPFSLYSGF). Over 37-131 (RRKSKTVAFF…HYKHCTMLFQ (95 aa)) the chain is Cytoplasmic. The segment at residues 132-152 (ALAGLILALEAWFRMVPAVFI) is an intramembrane region (helical). Over 153–378 (DSMGYPLSLP…ISIHTMHNEH (226 aa)) the chain is Cytoplasmic. Positions 379-399 (FGISVVEAMAASTIILSNDSG) form an intramembrane region, helical. At 400-470 (GPRMDIVKDY…HWNKEIEKVL (71 aa)) the chain is on the cytoplasmic side.

Belongs to the glycosyltransferase group 1 family. Glycosyltransferase 4 subfamily.

Its subcellular location is the endoplasmic reticulum membrane. The enzyme catalyses an alpha-D-Man-(1-&gt;3)-[alpha-D-Man-(1-&gt;6)]-beta-D-Man-(1-&gt;4)-beta-D-GlcNAc-(1-&gt;4)-alpha-D-GlcNAc-diphospho-di-trans,poly-cis-dolichol + 2 GDP-alpha-D-mannose = an alpha-D-Man-(1-&gt;2)-alpha-D-Man-(1-&gt;2)-alpha-D-Man-(1-&gt;3)-[alpha-D-Man-(1-&gt;6)]-beta-D-Man-(1-&gt;4)-beta-D-GlcNAc-(1-&gt;4)-alpha-D-GlcNAc-diphospho-di-trans,poly-cis-dolichol + 2 GDP + 2 H(+). The protein operates within protein modification; protein glycosylation. In terms of biological role, GDP-Man:Man(3)GlcNAc(2)-PP-Dol alpha-1,2-mannosyltransferase that operates in the biosynthetic pathway of dolichol-linked oligosaccharides, the glycan precursors employed in protein asparagine (N)-glycosylation. The assembly of dolichol-linked oligosaccharides begins on the cytosolic side of the endoplasmic reticulum membrane and finishes in its lumen. The sequential addition of sugars to dolichol pyrophosphate produces dolichol-linked oligosaccharides containing fourteen sugars, including two GlcNAcs, nine mannoses and three glucoses. Once assembled, the oligosaccharide is transferred from the lipid to nascent proteins by oligosaccharyltransferases. Catalyzes, on the cytoplasmic face of the endoplasmic reticulum, the addition of the fourth and fifth mannose residues to the dolichol-linked oligosaccharide chain, to produce Man(5)GlcNAc(2)-PP-dolichol core oligosaccharide. Man(5)GlcNAc(2)-PP-dolichol is a substrate for ALG3, the following enzyme in the biosynthetic pathway. The sequence is that of GDP-Man:Man(3)GlcNAc(2)-PP-Dol alpha-1,2-mannosyltransferase from Caenorhabditis elegans.